Here is a 311-residue protein sequence, read N- to C-terminus: Ribosomal RNA small subunit methyltransferase H (311 aa).

S-adenosyl-L-methionine-binding positions include 33–35, aspartate 51, phenylalanine 78, aspartate 99, and glutamine 106; that span reads GGH. The tract at residues 289–311 is disordered; that stretch reads EEIEKNRRAHSAKLRAAEKLSFA.

The protein belongs to the methyltransferase superfamily. RsmH family.

The protein resides in the cytoplasm. The enzyme catalyses cytidine(1402) in 16S rRNA + S-adenosyl-L-methionine = N(4)-methylcytidine(1402) in 16S rRNA + S-adenosyl-L-homocysteine + H(+). Functionally, specifically methylates the N4 position of cytidine in position 1402 (C1402) of 16S rRNA. This is Ribosomal RNA small subunit methyltransferase H from Carboxydothermus hydrogenoformans (strain ATCC BAA-161 / DSM 6008 / Z-2901).